Here is a 107-residue protein sequence, read N- to C-terminus: Guanine nucleotide-binding protein G(I)/G(S)/G(O) subunit gamma-14 (107 aa).

The 39-residue stretch at 69-107 folds into the G protein gamma domain; it reads KMAADLLKFCTEQAKNDPFLVGIPAATNSFKEKKPYAIL.

This sequence belongs to the G protein gamma family. G proteins are composed of 3 units; alpha, beta and gamma.

Its subcellular location is the cell membrane. In terms of biological role, guanine nucleotide-binding proteins (G proteins) are involved as a modulator or transducer in various transmembrane signaling systems. The beta and gamma chains are required for the GTPase activity, for replacement of GDP by GTP, and for G protein-effector interaction. The sequence is that of Guanine nucleotide-binding protein G(I)/G(S)/G(O) subunit gamma-14 from Homo sapiens (Human).